A 510-amino-acid polypeptide reads, in one-letter code: ATP synthase subunit alpha (510 aa).

169 to 176 (GDRQTGKT) provides a ligand contact to ATP.

Belongs to the ATPase alpha/beta chains family. In terms of assembly, F-type ATPases have 2 components, CF(1) - the catalytic core - and CF(0) - the membrane proton channel. CF(1) has five subunits: alpha(3), beta(3), gamma(1), delta(1), epsilon(1). CF(0) has four main subunits: a(1), b(1), b'(1) and c(9-12).

It localises to the cell inner membrane. The enzyme catalyses ATP + H2O + 4 H(+)(in) = ADP + phosphate + 5 H(+)(out). Produces ATP from ADP in the presence of a proton gradient across the membrane. The alpha chain is a regulatory subunit. The sequence is that of ATP synthase subunit alpha from Rhodospirillum rubrum (strain ATCC 11170 / ATH 1.1.1 / DSM 467 / LMG 4362 / NCIMB 8255 / S1).